Consider the following 80-residue polypeptide: MVVIRLARGGAKKNPYYRLMVADQRKSTNGRFIEQVGFYNPTARGQEEPLRLDMARIEHWVGQGAQLSPRVAKLVKDASK.

Belongs to the bacterial ribosomal protein bS16 family.

This is Small ribosomal subunit protein bS16 from Hydrogenovibrio crunogenus (strain DSM 25203 / XCL-2) (Thiomicrospira crunogena).